A 199-amino-acid chain; its full sequence is Putative pseudouridine methyltransferase (199 aa).

Positions 132 and 186 each coordinate S-adenosyl-L-methionine.

Belongs to the methyltransferase superfamily. TrmY family.

The protein resides in the cytoplasm. This chain is Putative pseudouridine methyltransferase, found in Vibrio campbellii (strain ATCC BAA-1116).